Here is a 120-residue protein sequence, read N- to C-terminus: NADH dehydrogenase [ubiquinone] 1 subunit C2 (120 aa).

Methionine 1 bears the N-acetylmethionine mark. Residues 57–76 (GLHRQLLYITSFVFVGYYLL) form a helical membrane-spanning segment.

Belongs to the complex I NDUFC2 subunit family. Complex I is composed of 45 different subunits. Interacts with TMEM242. There is a minor unacetylated form of subunit B14.5b.

It is found in the mitochondrion inner membrane. Its function is as follows. Accessory subunit of the mitochondrial membrane respiratory chain NADH dehydrogenase (Complex I), that is believed not to be involved in catalysis but required for the complex assembly. Complex I functions in the transfer of electrons from NADH to the respiratory chain. The immediate electron acceptor for the enzyme is believed to be ubiquinone. The chain is NADH dehydrogenase [ubiquinone] 1 subunit C2 from Bos taurus (Bovine).